The chain runs to 549 residues: Probable protein kinase UbiB (549 aa).

In terms of domain architecture, Protein kinase spans 123-501 (DFDETPLASA…QQQAHKSNYL (379 aa)). ATP is bound by residues 129–137 (LASASISQV) and Lys-152. Residue Asp-287 is the Proton acceptor of the active site. 2 helical membrane-spanning segments follow: residues 498–518 (SNYLLITSAILLICGTLLFNQ) and 520–540 (ATLWSPYVCLISGAVLWIIGW).

The protein belongs to the ABC1 family. UbiB subfamily.

The protein localises to the cell inner membrane. The protein operates within cofactor biosynthesis; ubiquinone biosynthesis [regulation]. Its function is as follows. Is probably a protein kinase regulator of UbiI activity which is involved in aerobic coenzyme Q (ubiquinone) biosynthesis. The sequence is that of Probable protein kinase UbiB from Shewanella sp. (strain ANA-3).